The sequence spans 165 residues: Phosphopantetheine adenylyltransferase (165 aa).

Residue Ser-10 participates in substrate binding. Residues 10-11 (SF) and His-18 each bind ATP. Substrate is bound by residues Lys-42, Thr-79, and Arg-93. Residues 94–96 (GLR), Glu-104, and 129–135 (VRPITAT) each bind ATP.

It belongs to the bacterial CoaD family. As to quaternary structure, homohexamer. Mg(2+) is required as a cofactor.

It is found in the cytoplasm. It carries out the reaction (R)-4'-phosphopantetheine + ATP + H(+) = 3'-dephospho-CoA + diphosphate. It participates in cofactor biosynthesis; coenzyme A biosynthesis; CoA from (R)-pantothenate: step 4/5. Functionally, reversibly transfers an adenylyl group from ATP to 4'-phosphopantetheine, yielding dephospho-CoA (dPCoA) and pyrophosphate. The polypeptide is Phosphopantetheine adenylyltransferase (Rhodopseudomonas palustris (strain BisB5)).